Consider the following 357-residue polypeptide: Cinnamyl alcohol dehydrogenase 1 (357 aa).

Zn(2+) is bound at residue Cys47. Residue Thr49 coordinates NADP(+). Zn(2+) is bound by residues His69, Glu70, Cys100, Cys103, Cys106, Cys114, and Cys163. NADP(+) is bound by residues Thr167, 188–193 (GLGGVG), 211–216 (SSSDKK), Thr251, Gly275, and 298–300 (SFI).

This sequence belongs to the zinc-containing alcohol dehydrogenase family. In terms of assembly, homodimer. Zn(2+) is required as a cofactor. In terms of tissue distribution, expressed in leaves, mainly in peltate glands.

The catalysed reaction is (E)-cinnamyl alcohol + NADP(+) = (E)-cinnamaldehyde + NADPH + H(+). It catalyses the reaction (E)-coniferol + NADP(+) = (E)-coniferaldehyde + NADPH + H(+). It carries out the reaction (E)-sinapyl alcohol + NADP(+) = (E)-sinapaldehyde + NADPH + H(+). The enzyme catalyses (E)-4-coumaroyl alcohol + NADP(+) = (E)-4-coumaraldehyde + NADPH + H(+). The catalysed reaction is (E)-caffeyl alcohol + NADP(+) = (E)-caffeyl aldehyde + NADPH + H(+). It participates in aromatic compound metabolism; phenylpropanoid biosynthesis. With respect to regulation, 60% inhibition by 5 mM Ca(+), Mg(+) or Cu(+). Functionally, involved in the production of citral, a mixture of geranial and neral with a strong lemony scent. Reversibly oxidizes geraniol to produce geranial at half the efficiency compared with its activity with cinnamyl alcohol. Does not use nerol and neral as substrates. The polypeptide is Cinnamyl alcohol dehydrogenase 1 (CAD1) (Ocimum basilicum (Sweet basil)).